Here is a 127-residue protein sequence, read N- to C-terminus: Small ribosomal subunit protein uS12 (127 aa).

Position 89 is a 3-methylthioaspartic acid (Asp89). Residues 101–127 (ALDTSGVAGRTQRRSKYGAKRPKEAKK) are disordered. Residues 111–127 (TQRRSKYGAKRPKEAKK) are compositionally biased toward basic residues.

Belongs to the universal ribosomal protein uS12 family. Part of the 30S ribosomal subunit. Contacts proteins S8 and S17. May interact with IF1 in the 30S initiation complex.

Functionally, with S4 and S5 plays an important role in translational accuracy. Interacts with and stabilizes bases of the 16S rRNA that are involved in tRNA selection in the A site and with the mRNA backbone. Located at the interface of the 30S and 50S subunits, it traverses the body of the 30S subunit contacting proteins on the other side and probably holding the rRNA structure together. The combined cluster of proteins S8, S12 and S17 appears to hold together the shoulder and platform of the 30S subunit. The protein is Small ribosomal subunit protein uS12 of Flavobacterium psychrophilum (strain ATCC 49511 / DSM 21280 / CIP 103535 / JIP02/86).